A 47-amino-acid polypeptide reads, in one-letter code: uncharacterized protein (47 aa).

This is an uncharacterized protein from Treponema pallidum (strain Nichols).